A 362-amino-acid polypeptide reads, in one-letter code: UDP-N-acetylglucosamine--N-acetylmuramyl-(pentapeptide) pyrophosphoryl-undecaprenol N-acetylglucosamine transferase (362 aa).

Residues 15 to 17 (TGG), N127, R165, S191, I247, 266 to 271 (ALTVSE), and Q292 each bind UDP-N-acetyl-alpha-D-glucosamine.

Belongs to the glycosyltransferase 28 family. MurG subfamily.

It localises to the cell inner membrane. It carries out the reaction di-trans,octa-cis-undecaprenyl diphospho-N-acetyl-alpha-D-muramoyl-L-alanyl-D-glutamyl-meso-2,6-diaminopimeloyl-D-alanyl-D-alanine + UDP-N-acetyl-alpha-D-glucosamine = di-trans,octa-cis-undecaprenyl diphospho-[N-acetyl-alpha-D-glucosaminyl-(1-&gt;4)]-N-acetyl-alpha-D-muramoyl-L-alanyl-D-glutamyl-meso-2,6-diaminopimeloyl-D-alanyl-D-alanine + UDP + H(+). It functions in the pathway cell wall biogenesis; peptidoglycan biosynthesis. Its function is as follows. Cell wall formation. Catalyzes the transfer of a GlcNAc subunit on undecaprenyl-pyrophosphoryl-MurNAc-pentapeptide (lipid intermediate I) to form undecaprenyl-pyrophosphoryl-MurNAc-(pentapeptide)GlcNAc (lipid intermediate II). This Shewanella sp. (strain MR-4) protein is UDP-N-acetylglucosamine--N-acetylmuramyl-(pentapeptide) pyrophosphoryl-undecaprenol N-acetylglucosamine transferase.